Reading from the N-terminus, the 308-residue chain is Cysteine proteinase 3 (308 aa).

The signal sequence occupies residues 1 to 13 (MFALILFVSLACA). The propeptide at 14–92 (NEVAFKQWAA…TSNVKAAVKA (79 aa)) is activation peptide. Disulfide bonds link C112/C153 and C146/C186. Residue C115 is part of the active site. Residues H251 and N271 contribute to the active site.

This sequence belongs to the peptidase C1 family.

The protein localises to the cytoplasm. It is found in the cytoplasmic vesicle. Its subcellular location is the phagosome. The enzyme catalyses Hydrolysis of proteins, including basement membrane collagen and azocasein. Preferential cleavage: Arg-Arg-|-Xaa in small molecule substrates including Z-Arg-Arg-|-NHMec.. Cysteine protease which may be involved in pathogenicity. This chain is Cysteine proteinase 3, found in Entamoeba histolytica (strain ATCC 30459 / HM-1:IMSS / ABRM).